The primary structure comprises 122 residues: Large ribosomal subunit protein uL14 (122 aa).

This sequence belongs to the universal ribosomal protein uL14 family. In terms of assembly, part of the 50S ribosomal subunit. Forms a cluster with proteins L3 and L19. In the 70S ribosome, L14 and L19 interact and together make contacts with the 16S rRNA in bridges B5 and B8.

Binds to 23S rRNA. Forms part of two intersubunit bridges in the 70S ribosome. This chain is Large ribosomal subunit protein uL14, found in Xylella fastidiosa (strain M23).